The sequence spans 249 residues: Ribosomal RNA small subunit methyltransferase J (249 aa).

Residue Asp-169 coordinates S-adenosyl-L-methionine.

The protein belongs to the methyltransferase superfamily. RsmJ family.

The protein resides in the cytoplasm. It catalyses the reaction guanosine(1516) in 16S rRNA + S-adenosyl-L-methionine = N(2)-methylguanosine(1516) in 16S rRNA + S-adenosyl-L-homocysteine + H(+). Functionally, specifically methylates the guanosine in position 1516 of 16S rRNA. The polypeptide is Ribosomal RNA small subunit methyltransferase J (Buchnera aphidicola subsp. Schizaphis graminum (strain Sg)).